The following is a 73-amino-acid chain: Large ribosomal subunit protein bL31 (73 aa).

Residues Cys-16, Cys-18, Cys-36, and Cys-39 each coordinate Zn(2+).

This sequence belongs to the bacterial ribosomal protein bL31 family. Type A subfamily. Part of the 50S ribosomal subunit. It depends on Zn(2+) as a cofactor.

Functionally, binds the 23S rRNA. In Citrifermentans bemidjiense (strain ATCC BAA-1014 / DSM 16622 / JCM 12645 / Bem) (Geobacter bemidjiensis), this protein is Large ribosomal subunit protein bL31.